We begin with the raw amino-acid sequence, 275 residues long: Large ribosomal subunit protein uL2 (275 aa).

2 disordered regions span residues 36-55 (KQSK…RHQG) and 223-275 (VAMN…RHKR). The span at 39–48 (KNAGRNNSGR) shows a compositional bias: polar residues. The segment covering 229-239 (DHPHGGGEGRT) has biased composition (basic and acidic residues).

The protein belongs to the universal ribosomal protein uL2 family. Part of the 50S ribosomal subunit. Forms a bridge to the 30S subunit in the 70S ribosome.

In terms of biological role, one of the primary rRNA binding proteins. Required for association of the 30S and 50S subunits to form the 70S ribosome, for tRNA binding and peptide bond formation. It has been suggested to have peptidyltransferase activity; this is somewhat controversial. Makes several contacts with the 16S rRNA in the 70S ribosome. The chain is Large ribosomal subunit protein uL2 from Aromatoleum aromaticum (strain DSM 19018 / LMG 30748 / EbN1) (Azoarcus sp. (strain EbN1)).